The chain runs to 1189 residues: Origin recognition complex subunit 1 (1189 aa).

A required for peripherial nuclear localization region spans residues 1–53 (MTPKKKIFQNFQANDNEILSPTKKGIKLNVSKLNILNFENTIITKEKTNYEYK). T2 carries the post-translational modification Phosphothreonine. S20 is subject to Phosphoserine. Leucine heptad repeat repeat units lie at residues 137 to 143 (LTNISSS), 144 to 150 (LTNISSS), 151 to 157 (LTNISSS), and 158 to 164 (LSNSLDE). A compositionally biased stretch (basic residues) spans 239–248 (KKNISKKNTH). Disordered stretches follow at residues 239 to 421 (KKNI…DHTD) and 679 to 749 (DTQA…QSSL). Residues 254–279 (QNDKNKEKNKEKDKNIKKDRDKDIQT) are compositionally biased toward basic and acidic residues. Over residues 304–320 (NNDNVKNNLKNNINNNN) the composition is skewed to low complexity. Over residues 321-339 (TLKRSSQSVRIDSDLSSAH) the composition is skewed to polar residues. Residues 353 to 381 (HRNNNNNNNNNNKTTSNNHNKNNKINNNN) are compositionally biased toward low complexity. Positions 385–394 (NYKKQTDTKH) are enriched in basic and acidic residues. The segment covering 395-411 (TNNTQNNKYNKTKTTNT) has biased composition (low complexity). The segment covering 695–709 (KAQTTTNVKANTHTK) has biased composition (polar residues). Composition is skewed to basic and acidic residues over residues 710–724 (TLNDHNKSKTTKNKE) and 733–742 (DVKKKSDPHN). Residues V780 and 815-823 (GMPGTGKTA) each bind ATP. Mg(2+) is bound by residues D903 and E904. An ATP-binding site is contributed by E904. Residues 913 to 922 (QKVLFTLFDW) carry the PIP-box motif. 2 residues coordinate ATP: N937 and R1003.

This sequence belongs to the ORC1 family. As to quaternary structure, component of the origin recognition complex (ORC). Interacts (via PIP-box) with PCNA1; the interaction occurs during DNA replication in trophozoites. In schizonts, may be phosphorylated by PK5; phosphorylation leads to ORC1 dissociation from the telomeres and var gene promoters, translocation to the cytoplasm, where it is degraded by the proteasome.

The protein resides in the nucleus. Its subcellular location is the chromosome. The protein localises to the telomere. It is found in the nucleolus. It catalyses the reaction ATP + H2O = ADP + phosphate + H(+). Component of the origin recognition complex (ORC) that binds origins of replication and thus may regulate the initiation of DNA replication. DNA-binding may not be ATP-dependent. In a SIR2A/Sir2-dependent manner, binds to and silences telomers and subtelomeric repeat regions (TAREs). In a SIR2A/Sir2-dependent manner, binds to promoters of var genes localized next to TAREs resulting in their silencing. The polypeptide is Origin recognition complex subunit 1 (Plasmodium falciparum (isolate 3D7)).